The following is a 214-amino-acid chain: Histone H1.1 (214 aa).

The interval 1 to 43 (MSETAPVPQPASVAPEKPAATKKTRKPAKAAVPRKKPAGPSVS) is disordered. Residue Ser-2 is modified to N-acetylserine. Phosphoserine is present on residues Ser-2 and Ser-12. Residue Lys-17 is modified to N6-acetyllysine. Residues 20–37 (ATKKTRKPAKAAVPRKKP) are compositionally biased toward basic residues. Lys-36 is modified (N6-(beta-hydroxybutyryl)lysine). In terms of domain architecture, H15 spans 38–111 (AGPSVSELIV…GAAGSFKLNK (74 aa)). Ser-43 bears the Phosphoserine mark. Lys-54 is modified (N6-(beta-hydroxybutyryl)lysine). Arg-56 carries the post-translational modification Citrulline. At Lys-66 the chain carries N6-(beta-hydroxybutyryl)lysine. The residue at position 67 (Ser-67) is a Phosphoserine. Lys-77 is modified (N6-acetyllysine). Lys-87 is subject to N6-(beta-hydroxybutyryl)lysine. Lys-92 carries the N6-(beta-hydroxybutyryl)lysine; alternate modification. At Lys-92 the chain carries N6-acetyllysine; alternate. Residues 93–214 (GTLVQTKGTG…KPKKAAPKKK (122 aa)) form a disordered region. Phosphoserine is present on Ser-106. The residue at position 108 (Lys-108) is an N6-(beta-hydroxybutyryl)lysine. A compositionally biased stretch (low complexity) spans 116–144 (KASTTKVTVKAKASGAAKKPKKTAGAAAK). An N6-acetyllysine modification is found at Lys-121. Basic residues-rich tracts occupy residues 145-179 (KTVK…KKVA) and 186-214 (KAVK…PKKK). Thr-202 is modified (phosphothreonine).

The protein belongs to the histone H1/H5 family. As to quaternary structure, interacts with DFFB. In terms of processing, H1 histones are progressively phosphorylated during the cell cycle, becoming maximally phosphorylated during late G2 phase and M phase, and being dephosphorylated sharply thereafter. Post-translationally, citrullination at Arg-56 (H1R54ci) by PADI4 takes place within the DNA-binding site of H1 and results in its displacement from chromatin and global chromatin decondensation, thereby promoting pluripotency and stem cell maintenance.

It is found in the nucleus. The protein localises to the chromosome. Its function is as follows. H1 histones bind to linker DNA between nucleosomes forming the macromolecular structure known as the chromatin fiber. H1 histones are necessary for the condensation of nucleosome chains into higher-order structured fibers. Also acts as a regulator of individual gene transcription through chromatin remodeling. This chain is Histone H1.1, found in Rattus norvegicus (Rat).